The following is an 84-amino-acid chain: Large ribosomal subunit protein bL27 (84 aa).

The tract at residues 1–25 (MAHKKAGGSSRNGRDSNGQRRGVKR) is disordered.

It belongs to the bacterial ribosomal protein bL27 family.

The polypeptide is Large ribosomal subunit protein bL27 (Desulfatibacillum aliphaticivorans).